Consider the following 600-residue polypeptide: Isocitrate dehydrogenase kinase/phosphatase (600 aa).

ATP is bound by residues 335 to 341 and K356; that span reads APGIRGM. D390 is an active-site residue.

This sequence belongs to the AceK family.

The protein resides in the cytoplasm. The catalysed reaction is L-seryl-[isocitrate dehydrogenase] + ATP = O-phospho-L-seryl-[isocitrate dehydrogenase] + ADP + H(+). Functionally, bifunctional enzyme which can phosphorylate or dephosphorylate isocitrate dehydrogenase (IDH) on a specific serine residue. This is a regulatory mechanism which enables bacteria to bypass the Krebs cycle via the glyoxylate shunt in response to the source of carbon. When bacteria are grown on glucose, IDH is fully active and unphosphorylated, but when grown on acetate or ethanol, the activity of IDH declines drastically concomitant with its phosphorylation. The protein is Isocitrate dehydrogenase kinase/phosphatase of Bordetella parapertussis (strain 12822 / ATCC BAA-587 / NCTC 13253).